A 622-amino-acid chain; its full sequence is Leucine-rich repeat and immunoglobulin-like domain-containing nogo receptor-interacting protein 1-B (622 aa).

Residues 1-43 form the signal peptide; it reads MTFLQVTIKMVAREASGHSYLVACWQPILILMLGTVLSGSATG. Cystine bridges form between Cys44-Cys50 and Cys48-Cys59. The LRRNT domain occupies 44–73; sequence CPSRCECSAQERSVVCHRRKLITLPEGIPI. At 44–563 the chain is on the extracellular side; it reads CPSRCECSAQ…FDMKTLIIAT (520 aa). LRR repeat units lie at residues 74 to 95, 98 to 119, 122 to 143, 146 to 167, 170 to 191, 194 to 215, 218 to 239, 266 to 287, 290 to 311, 314 to 335, and 338 to 359; these read DTRL…EFLN, QLED…AFSN, GLRT…VFTG, NLTR…MFQE, NLKE…AFHG, SLEQ…AFSH, NLLT…SFRR, NITT…AIQH, YLRF…KMHN, RLQA…SFKG, and YLRV…AFHS. Asn146 carries an N-linked (GlcNAc...) asparagine glycan. The N-linked (GlcNAc...) asparagine glycan is linked to Asn204. N-linked (GlcNAc...) asparagine glycosylation is found at Asn266, Asn276, and Asn295. Asn343 carries an N-linked (GlcNAc...) asparagine glycan. Residues 371–425 enclose the LRRCT domain; that stretch reads NPLACDCRLLWVFRRRWRLNFNRQQPSCETPEFLQGKEFKDFPDVLPPNYFTCQK. Intrachain disulfides connect Cys375/Cys398, Cys377/Cys423, and Cys448/Cys499. The Ig-like C2-type domain maps to 413–515; that stretch reads PDVLPPNYFT…GNDTRLAHLH (103 aa). Residues Asn494, Asn507, Asn528, and Asn544 are each glycosylated (N-linked (GlcNAc...) asparagine). The helical transmembrane segment at 564 to 584 threads the bilayer; it reads TMGFISFLGVVLFCLVLLFLW. The Cytoplasmic portion of the chain corresponds to 585–622; it reads SRGKGNAKPNIEIEYVPRKVDGENSPNEGSHKISMKMI.

Its subcellular location is the cell membrane. Functionally, may play a role in regulating axonal regeneration and plasticity in the adult central nervous system. The protein is Leucine-rich repeat and immunoglobulin-like domain-containing nogo receptor-interacting protein 1-B (lingo1b) of Danio rerio (Zebrafish).